Reading from the N-terminus, the 222-residue chain is Glutathione S-transferase U21 (222 aa).

Residues 3 to 83 (AEVILLGFWP…YIDEVWSDNN (81 aa)) enclose the GST N-terminal domain. Glutathione is bound by residues 13-14 (SM), 40-41 (NK), 54-55 (TI), and 67-68 (ES). The 123-residue stretch at 89 to 211 (DPYHRAQALF…LPDSEKVVGY (123 aa)) folds into the GST C-terminal domain.

Belongs to the GST superfamily. Tau family.

The protein resides in the cytoplasm. It localises to the cytosol. It catalyses the reaction RX + glutathione = an S-substituted glutathione + a halide anion + H(+). In terms of biological role, may be involved in the conjugation of reduced glutathione to a wide number of exogenous and endogenous hydrophobic electrophiles and have a detoxification role against certain herbicides. The protein is Glutathione S-transferase U21 (GSTU21) of Arabidopsis thaliana (Mouse-ear cress).